A 147-amino-acid chain; its full sequence is Ribosomal RNA large subunit methyltransferase H (147 aa).

Residues L64, G96, and 115 to 120 each bind S-adenosyl-L-methionine; that span reads FSKMTF.

This sequence belongs to the RNA methyltransferase RlmH family. Homodimer.

Its subcellular location is the cytoplasm. It catalyses the reaction pseudouridine(1915) in 23S rRNA + S-adenosyl-L-methionine = N(3)-methylpseudouridine(1915) in 23S rRNA + S-adenosyl-L-homocysteine + H(+). Its function is as follows. Specifically methylates the pseudouridine at position 1915 (m3Psi1915) in 23S rRNA. The chain is Ribosomal RNA large subunit methyltransferase H from Acholeplasma laidlawii (strain PG-8A).